Reading from the N-terminus, the 70-residue chain is MPGIKVREGDAFDEAYRRFKKQTDRNLVVTECRARRFFESKTEKHKKQKISAKKKILKRLYMLRRYESRL.

It belongs to the bacterial ribosomal protein bS21 family.

This is Small ribosomal subunit protein bS21 from Helicobacter acinonychis (strain Sheeba).